We begin with the raw amino-acid sequence, 299 residues long: MTLSVLSRKDKERVIRRLLLQAPPGEFVNAFDDLCLLIRDEKLMHHQGECAGHQHCQKYSVPLCIDGNPVLLSHHNVMGDYRFFDHQSKLSFKYDLLQNQLKDIQSHGIIQNEAEYLRVVLLCALKLYVNDHYPKGNCNMLRKTVKSKEYLIACIEDHNYETGECWNGLWKSKWIFQVNPFLTQVTGRIFVQAHFFRCVNLHIEISKDLKESLEIVNQAQLALSFARLVEEQENKFQAAVLEELQELSNEALRKILRRDLPVTRTLIDWHRILSDLNLVMYPKLGYVIYSRSVLCNWII.

S290 bears the Phosphoserine mark.

Belongs to the F-actin-capping protein alpha subunit family. Component of the F-actin capping complex, composed of a heterodimer of an alpha and a beta subunit. Component of the WASH complex, composed of F-actin-capping protein subunit alpha (CAPZA1, CAPZA2 or CAPZA3), F-actin-capping protein subunit beta (CAPZB), WASH (WASHC1, WASH2P, WASH3P, WASH4P, WASH5P or WASH6P), WASHC2 (WASHC2A or WASHC2C), WASHC3, WASHC4 and WASHC5. Expressed exclusively in testis and sperm. Highest expression is found in the neck region of ejaculated sperm with lower levels found in the tail and postacrosome region.

Its subcellular location is the cytoplasm. The protein localises to the cytoskeleton. F-actin-capping proteins bind in a Ca(2+)-independent manner to the fast growing ends of actin filaments (barbed end) thereby blocking the exchange of subunits at these ends. Unlike other capping proteins (such as gelsolin and severin), these proteins do not sever actin filaments. May play a role in the morphogenesis of spermatid. This Homo sapiens (Human) protein is F-actin-capping protein subunit alpha-3 (CAPZA3).